The chain runs to 490 residues: Limb region 1 protein (490 aa).

Topologically, residues 1–19 are extracellular; it reads MEGQDEVSAREQHFHSQVR. Residues 20–40 traverse the membrane as a helical segment; the sequence is ESTICFLLFAILYIVSYFIII. Residues 41 to 62 lie on the Cytoplasmic side of the membrane; that stretch reads RYKRKSDEQEDEDAVVNRISLF. The helical transmembrane segment at 63 to 83 threads the bilayer; the sequence is LSTFTLAVSAGAVLLLPFSII. Topologically, residues 84-110 are extracellular; the sequence is SNEILLAFPHNYYIQWLNGSLIHGLWN. Residues 111–131 form a helical membrane-spanning segment; that stretch reads LASLFSNLCLFVLMPFAFFFL. The Cytoplasmic portion of the chain corresponds to 132 to 151; the sequence is ESEGFAGLKKGIRARILETL. A helical transmembrane segment spans residues 152 to 172; the sequence is VMLLLLALLILGMVWVASALI. Topologically, residues 173–187 are extracellular; sequence DSDAASMESLYDLWE. A helical membrane pass occupies residues 188–208; sequence FYLPYLYSCISLMGCLLLLLC. The Cytoplasmic portion of the chain corresponds to 209-291; the sequence is TPVGLSRMFT…RKKASAWERN (83 aa). The stretch at 256–287 forms a coiled coil; the sequence is SSVEYNVMELEQELENVKILKTKLERRKKASA. A helical transmembrane segment spans residues 292–312; sequence LVYPAVMVLLLIETSISVLLV. Residues 313–339 are Extracellular-facing; the sequence is ACNILCLLVDETAMPKGTRGPGIGSAS. A helical membrane pass occupies residues 340–360; that stretch reads LSTFGFVGAALEIILIFYLMV. Residues 361–383 lie on the Cytoplasmic side of the membrane; it reads SSVVGFYSLRFFGNFTPKKDDTT. The chain crosses the membrane as a helical span at residues 384-404; the sequence is MTKIIGNCVSILVLSSALPVM. At 405-426 the chain is on the extracellular side; sequence SRTLGITRFDLLGDFGRFNWLG. A helical transmembrane segment spans residues 427-447; the sequence is NFYIVLSYNLLFAIMTTLCLI. Residues 448–490 lie on the Cytoplasmic side of the membrane; that stretch reads RKFTSAVREELFKALGLHKLHLSDTSRDSETTKPSANGHQKAL.

It belongs to the LIMR family.

It is found in the membrane. Its function is as follows. Putative membrane receptor. In Mus musculus (Mouse), this protein is Limb region 1 protein (Lmbr1).